The following is a 347-amino-acid chain: NADH-ubiquinone oxidoreductase chain 2 (347 aa).

11 helical membrane-spanning segments follow: residues M1–A21, H25–T45, A55–L75, T96–P116, T123–Y143, I145–G165, I178–P198, I200–N220, L237–L257, G274–M294, and F324–F344.

The protein belongs to the complex I subunit 2 family. As to quaternary structure, core subunit of respiratory chain NADH dehydrogenase (Complex I) which is composed of 45 different subunits. Interacts with TMEM242.

The protein localises to the mitochondrion inner membrane. The enzyme catalyses a ubiquinone + NADH + 5 H(+)(in) = a ubiquinol + NAD(+) + 4 H(+)(out). Its function is as follows. Core subunit of the mitochondrial membrane respiratory chain NADH dehydrogenase (Complex I) which catalyzes electron transfer from NADH through the respiratory chain, using ubiquinone as an electron acceptor. Essential for the catalytic activity and assembly of complex I. This chain is NADH-ubiquinone oxidoreductase chain 2, found in Hylobates lar (Lar gibbon).